Here is a 496-residue protein sequence, read N- to C-terminus: MSARCIMVLGTTSGAGKSWLATALCRHYSNQGLKVAPFKAQNMSNNARVVAAPGGEGSEAGGFGAWGEIGSAQYFQALAARAVPDVRMNPLLLKPEADTHSQVVLLGQVSDALSQMPWRGRSEKVWPQIAAALDALRAENDVVVIEGAGSPAEINLHASDIVNMRVARHAQARCLLVTDIDRGGAFAHLYGTWALLPADERALIAGFVLNKFRGDEALLAPAPQMLQDKTGVPVVATIPMQWDHGLPEEDGVFDDRARASGAVHTRIAVVAYPRISNLDEFQPLKNVPGVRLSWARSPADVHGADWIILPGSKATAADLAWLRAQGLDAAIAAHAARGGRVLGVCGGLQMLGEALIDTVGVDGNGPGLGLLPLVTSFEATKTVRPTRQCFGAVQGAWRHLAGVAVQGYEIHHGQTAQHPAMAASGDVARELIPGLAWQNPGGNVLGLYLHGLFEDAAVLRALFGADAPTLDAVFEGLAAGIARHFEPGVLDALAVQ.

Residues 264–458 (HTRIAVVAYP…LHGLFEDAAV (195 aa)) enclose the GATase cobBQ-type domain. Cys-345 functions as the Nucleophile in the catalytic mechanism. Residue His-450 is part of the active site.

The protein belongs to the CobB/CobQ family. CobQ subfamily.

The protein operates within cofactor biosynthesis; adenosylcobalamin biosynthesis. Catalyzes amidations at positions B, D, E, and G on adenosylcobyrinic A,C-diamide. NH(2) groups are provided by glutamine, and one molecule of ATP is hydrogenolyzed for each amidation. This is Cobyric acid synthase from Acidovorax ebreus (strain TPSY) (Diaphorobacter sp. (strain TPSY)).